The primary structure comprises 142 residues: MALERTFSIIKPNAVANNDIGAIYARFERAGFKIIAAKMLHLTKEQAEGFYAEHKGRPFFDGLVEFMTSGPIMVQVLEGENAVQRHRDIMGATNPDNALAGTLRADFSDSFTANAVHGSDAVESAQREIAYFFAADEIFPRS.

Lysine 11, phenylalanine 59, arginine 87, threonine 93, arginine 104, and asparagine 114 together coordinate ATP. The Pros-phosphohistidine intermediate role is filled by histidine 117.

It belongs to the NDK family. Homotetramer. Requires Mg(2+) as cofactor.

The protein localises to the cytoplasm. It carries out the reaction a 2'-deoxyribonucleoside 5'-diphosphate + ATP = a 2'-deoxyribonucleoside 5'-triphosphate + ADP. The catalysed reaction is a ribonucleoside 5'-diphosphate + ATP = a ribonucleoside 5'-triphosphate + ADP. Its function is as follows. Major role in the synthesis of nucleoside triphosphates other than ATP. The ATP gamma phosphate is transferred to the NDP beta phosphate via a ping-pong mechanism, using a phosphorylated active-site intermediate. This Yersinia pestis bv. Antiqua (strain Antiqua) protein is Nucleoside diphosphate kinase.